We begin with the raw amino-acid sequence, 279 residues long: Mirror-image polydactyly gene 1 protein homolog (279 aa).

Residues 1-11 (MNSEQSIRELG) show a composition bias toward basic and acidic residues. The segment at 1–21 (MNSEQSIRELGNEVPSEDLEL) is disordered. 2 coiled-coil regions span residues 65–169 (LNKE…MLEN) and 218–255 (AEEM…STNN). The segment at 247-268 (KQNQTSTNNTKHPTAKNNQEHT) is disordered. Residues 248-263 (QNQTSTNNTKHPTAKN) show a composition bias toward polar residues.

This is Mirror-image polydactyly gene 1 protein homolog (Mipol1) from Mus musculus (Mouse).